Here is a 461-residue protein sequence, read N- to C-terminus: Steroidogenic factor 1 (461 aa).

A DNA-binding region (nuclear receptor) is located at residues 10 to 85 (DELCPVCGDK…VGMRLEAVRA (76 aa)). The segment at 13-33 (CPVCGDKVSGYHYGLLTCESC) adopts an NR C4-type zinc-finger fold. N6-acetyllysine is present on residues Lys34, Lys38, and Lys72. An NR C4-type zinc finger spans residues 49–73 (CTESQSCKIDKTQRKRCPFCRFQKC). The segment at 116-158 (NGFKLETGPPVGVPPPPPPPPDYMLPHGLHASEPKGLASGPPA) is disordered. Lys119 participates in a covalent cross-link: Glycyl lysine isopeptide (Lys-Gly) (interchain with G-Cter in SUMO). Pro residues predominate over residues 126 to 138 (VGVPPPPPPPPDY). Lys194 participates in a covalent cross-link: Glycyl lysine isopeptide (Lys-Gly) (interchain with G-Cter in SUMO). Residue Ser203 is modified to Phosphoserine; by CDK7. The region spanning 222–459 (GVPELILQLL…NLLIEMLQAK (238 aa)) is the NR LBD domain. The tract at residues 230–461 (LLQLEPDEDQ…LIEMLQAKQT (232 aa)) is important for dimerization. Gly341, Tyr436, and Lys440 together coordinate a 1,2-diacyl-sn-glycero-3-phosphocholine.

Belongs to the nuclear hormone receptor family. NR5 subfamily. In terms of assembly, binds DNA as a monomer. Part of a complex consisting of SFPQ, NONO and NR5A1. Interacts with NR0B2. Interacts with DGKQ and CDK7. Binds to and activated by HIPK3. Post-translationally, may be regulated by phosphorylation and dephosphorylation. In terms of processing, acetylation stimulates the transcriptional activity. Sumoylation reduces CDK7-mediated phosphorylation on Ser-203. Post-translationally, phosphorylated on Ser-203 by CDK7. This phosphorylation promotes transcriptional activity. In terms of tissue distribution, adrenal, ovary, testis, placenta, adipocyte, and brain.

It is found in the nucleus. Its function is as follows. Transcriptional activator. Seems to be essential for sexual differentiation and formation of the primary steroidogenic tissues. Binds to the Ad4 site found in the promoter region of steroidogenic P450 genes such as CYP11A, CYP11B and CYP21B. Also regulates the AMH/Muellerian inhibiting substance gene as well as the AHCH and STAR genes. 5'-YCAAGGYC-3' and 5'-RRAGGTCA-3' are the consensus sequences for the recognition by NR5A1. The SFPQ-NONO-NR5A1 complex binds to the CYP17 promoter and regulates basal and cAMP-dependent transcriptional activity. Binds phospholipids with a phosphatidylinositol (PI) headgroup, in particular PI(3,4)P2 and PI(3,4,5)P3. Activated by the phosphorylation of NR5A1 by HIPK3 leading to increased steroidogenic gene expression upon cAMP signaling pathway stimulation. The chain is Steroidogenic factor 1 (NR5A1) from Bos taurus (Bovine).